Here is a 421-residue protein sequence, read N- to C-terminus: 3-phosphoshikimate 1-carboxyvinyltransferase (421 aa).

Residues K20, S21, and R25 each contribute to the 3-phosphoshikimate site. A phosphoenolpyruvate-binding site is contributed by K20. Phosphoenolpyruvate-binding residues include G90 and R117. Residues S162, S163, Q164, S190, D304, and K331 each coordinate 3-phosphoshikimate. Q164 contributes to the phosphoenolpyruvate binding site. The Proton acceptor role is filled by D304. Residues R335 and R376 each contribute to the phosphoenolpyruvate site.

The protein belongs to the EPSP synthase family. Monomer.

The protein localises to the cytoplasm. The catalysed reaction is 3-phosphoshikimate + phosphoenolpyruvate = 5-O-(1-carboxyvinyl)-3-phosphoshikimate + phosphate. Its pathway is metabolic intermediate biosynthesis; chorismate biosynthesis. Functionally, catalyzes the transfer of the enolpyruvyl moiety of phosphoenolpyruvate (PEP) to the 5-hydroxyl of shikimate-3-phosphate (S3P) to produce enolpyruvyl shikimate-3-phosphate and inorganic phosphate. The chain is 3-phosphoshikimate 1-carboxyvinyltransferase from Methanothrix thermoacetophila (strain DSM 6194 / JCM 14653 / NBRC 101360 / PT) (Methanosaeta thermophila).